We begin with the raw amino-acid sequence, 248 residues long: Phosphatidylglycerol--prolipoprotein diacylglyceryl transferase (248 aa).

3 consecutive transmembrane segments (helical) span residues 6 to 26 (FSIFGIDIMWYGILITLGVIL), 48 to 68 (ILVWALPLAIVGARAYYVIFE), and 84 to 104 (GGGLAIYGGIIAAVITCYVIC). Arginine 130 contributes to the a 1,2-diacyl-sn-glycero-3-phospho-(1'-sn-glycerol) binding site. 2 consecutive transmembrane segments (helical) span residues 187 to 207 (GQITSMYMILYGILRFFVEGL) and 214 to 234 (IGALRVSQLVSIAIIIAGVIL).

Belongs to the Lgt family.

The protein localises to the cell membrane. It carries out the reaction L-cysteinyl-[prolipoprotein] + a 1,2-diacyl-sn-glycero-3-phospho-(1'-sn-glycerol) = an S-1,2-diacyl-sn-glyceryl-L-cysteinyl-[prolipoprotein] + sn-glycerol 1-phosphate + H(+). The protein operates within protein modification; lipoprotein biosynthesis (diacylglyceryl transfer). Its function is as follows. Catalyzes the transfer of the diacylglyceryl group from phosphatidylglycerol to the sulfhydryl group of the N-terminal cysteine of a prolipoprotein, the first step in the formation of mature lipoproteins. The protein is Phosphatidylglycerol--prolipoprotein diacylglyceryl transferase of Finegoldia magna (strain ATCC 29328 / DSM 20472 / WAL 2508) (Peptostreptococcus magnus).